Here is a 185-residue protein sequence, read N- to C-terminus: Ribosome-recycling factor (185 aa).

This sequence belongs to the RRF family.

Its subcellular location is the cytoplasm. Functionally, responsible for the release of ribosomes from messenger RNA at the termination of protein biosynthesis. May increase the efficiency of translation by recycling ribosomes from one round of translation to another. This chain is Ribosome-recycling factor, found in Hahella chejuensis (strain KCTC 2396).